Here is a 174-residue protein sequence, read N- to C-terminus: Interleukin-10 (174 aa).

An N-terminal signal peptide occupies residues Met-1–Ser-16. Asn-17 carries an N-linked (GlcNAc...) asparagine glycan. Disulfide bonds link Cys-26-Cys-122 and Cys-76-Cys-128.

This sequence belongs to the IL-10 family. As to quaternary structure, homodimer. Interacts with IL10RA and IL10RB.

The protein localises to the secreted. Its function is as follows. Major immune regulatory cytokine that acts on many cells of the immune system where it has profound anti-inflammatory functions, limiting excessive tissue disruption caused by inflammation. Mechanistically, IL10 binds to its heterotetrameric receptor comprising IL10RA and IL10RB leading to JAK1 and STAT2-mediated phosphorylation of STAT3. In turn, STAT3 translocates to the nucleus where it drives expression of anti-inflammatory mediators. Targets antigen-presenting cells (APCs) such as macrophages and monocytes and inhibits their release of pro-inflammatory cytokines including granulocyte-macrophage colony-stimulating factor /GM-CSF, granulocyte colony-stimulating factor/G-CSF, IL-1 alpha, IL-1 beta, IL-6, IL-8 and TNF-alpha. Also interferes with antigen presentation by reducing the expression of MHC-class II and co-stimulatory molecules, thereby inhibiting their ability to induce T cell activation. In addition, controls the inflammatory response of macrophages by reprogramming essential metabolic pathways including mTOR signaling. This Trichosurus vulpecula (Brush-tailed possum) protein is Interleukin-10 (IL10).